The chain runs to 587 residues: Protein POF1B (587 aa).

The stretch at 331–529 (STFSNIREEL…EELSKLRQEI (199 aa)) forms a coiled coil.

In terms of assembly, interacts with nonmuscle actin. In terms of tissue distribution, expression absent in adult ovary.

It localises to the cell junction. The protein localises to the tight junction. Plays a key role in the organization of epithelial monolayers by regulating the actin cytoskeleton. May be involved in ovary development. This is Protein POF1B (Pof1b) from Mus musculus (Mouse).